Reading from the N-terminus, the 278-residue chain is Glycerophosphodiester phosphodiesterase GpdQ (278 aa).

Fe cation contacts are provided by aspartate 8, histidine 10, aspartate 50, asparagine 80, histidine 156, histidine 195, and histidine 197.

Belongs to the cyclic nucleotide phosphodiesterase class-III family. The cofactor is Fe(2+).

The enzyme catalyses a sn-glycero-3-phosphodiester + H2O = an alcohol + sn-glycerol 3-phosphate + H(+). It catalyses the reaction sn-glycero-3-phosphoethanolamine + H2O = ethanolamine + sn-glycerol 3-phosphate + H(+). Its function is as follows. Catalyzes the hydrolysis of the 3'-5' phosphodiester bond of glycerophosphodiesters such as glycerophosphorylethanolamine (GPE), a typical phospholipid metabolite. In Enterobacter lignolyticus (strain SCF1), this protein is Glycerophosphodiester phosphodiesterase GpdQ.